A 161-amino-acid polypeptide reads, in one-letter code: Protein ZMO0507 (161 aa).

Belongs to the free Met sulfoxide reductase family.

The polypeptide is Protein ZMO0507 (Zymomonas mobilis subsp. mobilis (strain ATCC 31821 / ZM4 / CP4)).